The chain runs to 314 residues: Tudor-interacting repair regulator protein (314 aa).

Residue Gly-2 is the site of N-myristoyl glycine attachment.

It belongs to the Nudix hydrolase family. TIRR subfamily. As to quaternary structure, interacts (via the cytoplasmic part) with syndecan-4 (SDC4), but not with other syndecan proteins. Myristoylated in vitro; additional evidence is however required to confirm myristoylation in vivo. As to expression, ubiquitously expressed. Expressed in embryonic brain, eyes, gizzard, heart, intestine, kidney, liver, tibia and skin.

The protein localises to the nucleus. The protein resides in the cytoplasm. Its subcellular location is the cytoskeleton. It localises to the cell membrane. It is found in the cell junction. The protein localises to the focal adhesion. Its function is as follows. Key regulator of TP53BP1 required to stabilize TP53BP1 and regulate its recruitment to chromatin. The sequence is that of Tudor-interacting repair regulator protein (NUDT16L1) from Gallus gallus (Chicken).